The chain runs to 232 residues: 2-C-methyl-D-erythritol 4-phosphate cytidylyltransferase (232 aa).

It belongs to the IspD/TarI cytidylyltransferase family. IspD subfamily.

The catalysed reaction is 2-C-methyl-D-erythritol 4-phosphate + CTP + H(+) = 4-CDP-2-C-methyl-D-erythritol + diphosphate. It participates in isoprenoid biosynthesis; isopentenyl diphosphate biosynthesis via DXP pathway; isopentenyl diphosphate from 1-deoxy-D-xylulose 5-phosphate: step 2/6. Catalyzes the formation of 4-diphosphocytidyl-2-C-methyl-D-erythritol from CTP and 2-C-methyl-D-erythritol 4-phosphate (MEP). In Deinococcus radiodurans (strain ATCC 13939 / DSM 20539 / JCM 16871 / CCUG 27074 / LMG 4051 / NBRC 15346 / NCIMB 9279 / VKM B-1422 / R1), this protein is 2-C-methyl-D-erythritol 4-phosphate cytidylyltransferase.